The following is a 511-amino-acid chain: Histidine ammonia-lyase (511 aa).

Positions 143 to 145 (ASG) form a cross-link, 5-imidazolinone (Ala-Gly). 2,3-didehydroalanine (Ser) is present on Ser-144.

The protein belongs to the PAL/histidase family. Contains an active site 4-methylidene-imidazol-5-one (MIO), which is formed autocatalytically by cyclization and dehydration of residues Ala-Ser-Gly.

It localises to the cytoplasm. The catalysed reaction is L-histidine = trans-urocanate + NH4(+). It participates in amino-acid degradation; L-histidine degradation into L-glutamate; N-formimidoyl-L-glutamate from L-histidine: step 1/3. In Idiomarina loihiensis (strain ATCC BAA-735 / DSM 15497 / L2-TR), this protein is Histidine ammonia-lyase.